Consider the following 298-residue polypeptide: Mitochondrial substrate carrier family protein N (298 aa).

The Mitochondrial intermembrane segment spans residues 1–13 (MAGDLTPSLFLKY). Solcar repeat units follow at residues 8–92 (SLFL…FKKT), 104–188 (FRIP…TAEN), and 207–290 (QKLS…IKQM). A helical membrane pass occupies residues 14–34 (GFGGALSCSITHSLVVPLDVV). The Mitochondrial matrix portion of the chain corresponds to 35–60 (KTLLQTNPGKYTGMMNGFSTVIKEQG). A helical transmembrane segment spans residues 61–81 (PSGLLQGLGPTAVGYALQGFL). Topologically, residues 82–105 (KFGFYEVFKKTYADAVGEKADQFR) are mitochondrial intermembrane. Residues 106-126 (IPIWLAASATAEVIADIALCP) form a helical membrane-spanning segment. The Mitochondrial matrix portion of the chain corresponds to 127-162 (NEAVRIRLVAEPTFAKSPVEAFGKIFKQEGVLGFYK). Residues 163–179 (GLPPILLKQVPYTMAKF) traverse the membrane as a helical segment. The Mitochondrial intermembrane segment spans residues 180-208 (AVFEFTAENVYKGLAASGKPKESLTDGQK). The chain crosses the membrane as a helical span at residues 209–229 (LSVSLGSGIVAGIVAAIVSQP). Residues 230 to 262 (ADTILSKINQEKTDGGVVKAIGNIMRRLGVRGL) lie on the Mitochondrial matrix side of the membrane. Residues 263–283 (FLGLPTRCFMVGTLTAGQFFI) form a helical membrane-spanning segment. At 284–298 (YDGIKQMLGLTPAKK) the chain is on the mitochondrial intermembrane side.

This sequence belongs to the mitochondrial carrier (TC 2.A.29) family.

It is found in the mitochondrion inner membrane. In terms of biological role, mitochondrial solute carriers shuttle metabolites, nucleotides, and cofactors through the mitochondrial inner membrane. Transports phosphate groups from the cytosol to the mitochondrial matrix. Phosphate is cotransported with H(+). In Dictyostelium discoideum (Social amoeba), this protein is Mitochondrial substrate carrier family protein N (mcfN).